The following is a 356-amino-acid chain: Peptide chain release factor 1 (356 aa).

Position 235 is an N5-methylglutamine (Gln235).

Belongs to the prokaryotic/mitochondrial release factor family. Post-translationally, methylated by PrmC. Methylation increases the termination efficiency of RF1.

The protein localises to the cytoplasm. Functionally, peptide chain release factor 1 directs the termination of translation in response to the peptide chain termination codons UAG and UAA. The protein is Peptide chain release factor 1 of Mycobacteroides abscessus (strain ATCC 19977 / DSM 44196 / CCUG 20993 / CIP 104536 / JCM 13569 / NCTC 13031 / TMC 1543 / L948) (Mycobacterium abscessus).